The sequence spans 58 residues: Probable mRNA interferase HicA 2 (58 aa).

Belongs to the HicA mRNA interferase family. In terms of assembly, probably forms a complex with the cognate antitoxin HicB 2 which inhibits the mRNA interferase activity.

In terms of biological role, toxic component of a type II toxin-antitoxin (TA) system. A probable translation-independent mRNA interferase. This chain is Probable mRNA interferase HicA 2 (hicA2), found in Photorhabdus laumondii subsp. laumondii (strain DSM 15139 / CIP 105565 / TT01) (Photorhabdus luminescens subsp. laumondii).